The primary structure comprises 241 residues: Uridylate kinase (241 aa).

15 to 18 serves as a coordination point for ATP; sequence KLSG. The segment at 23 to 28 is involved in allosteric activation by GTP; the sequence is GSEGFG. G57 lines the UMP pocket. The ATP site is built by G58 and R62. UMP contacts are provided by residues D77 and 138-145; that span reads TGNPFFTT. Positions 165, 171, and 174 each coordinate ATP.

It belongs to the UMP kinase family. In terms of assembly, homohexamer.

The protein resides in the cytoplasm. It carries out the reaction UMP + ATP = UDP + ADP. It participates in pyrimidine metabolism; CTP biosynthesis via de novo pathway; UDP from UMP (UMPK route): step 1/1. Allosterically activated by GTP. Inhibited by UTP. Its function is as follows. Catalyzes the reversible phosphorylation of UMP to UDP. In Klebsiella pneumoniae subsp. pneumoniae (strain ATCC 700721 / MGH 78578), this protein is Uridylate kinase.